The chain runs to 217 residues: GrpE protein homolog 1, mitochondrial (217 aa).

A mitochondrion-targeting transit peptide spans 1-27 (MAARCVRLARGSLPAFALSLRSSPRLL). At lysine 94 the chain carries N6-acetyllysine; alternate. Lysine 94 is subject to N6-succinyllysine; alternate. Lysine 100 carries the N6-acetyllysine modification. An N6-succinyllysine modification is found at lysine 120. At lysine 215 the chain carries N6-acetyllysine; alternate. Residue lysine 215 is modified to N6-succinyllysine; alternate.

It belongs to the GrpE family. Probable component of the PAM complex at least composed of a mitochondrial HSP70 protein, GRPEL1 or GRPEL2, TIMM44, TIMM16/PAM16 and TIMM14/DNAJC19. Binds to HSP70, HSC70 and HSJ1B.

The protein resides in the mitochondrion matrix. Its function is as follows. Essential component of the PAM complex, a complex required for the translocation of transit peptide-containing proteins from the inner membrane into the mitochondrial matrix in an ATP-dependent manner. Seems to control the nucleotide-dependent binding of mitochondrial HSP70 to substrate proteins. In Bos taurus (Bovine), this protein is GrpE protein homolog 1, mitochondrial (GRPEL1).